A 793-amino-acid polypeptide reads, in one-letter code: Endonuclease MutS2 (793 aa).

335–342 (GPNTGGKT) is an ATP binding site. The Smr domain occupies 718–793 (IDVRGYNLEE…ESGVTIVELR (76 aa)).

This sequence belongs to the DNA mismatch repair MutS family. MutS2 subfamily. As to quaternary structure, homodimer. Binds to stalled ribosomes, contacting rRNA.

In terms of biological role, endonuclease that is involved in the suppression of homologous recombination and thus may have a key role in the control of bacterial genetic diversity. Acts as a ribosome collision sensor, splitting the ribosome into its 2 subunits. Detects stalled/collided 70S ribosomes which it binds and splits by an ATP-hydrolysis driven conformational change. Acts upstream of the ribosome quality control system (RQC), a ribosome-associated complex that mediates the extraction of incompletely synthesized nascent chains from stalled ribosomes and their subsequent degradation. Probably generates substrates for RQC. This chain is Endonuclease MutS2, found in Acetivibrio thermocellus (strain ATCC 27405 / DSM 1237 / JCM 9322 / NBRC 103400 / NCIMB 10682 / NRRL B-4536 / VPI 7372) (Clostridium thermocellum).